The primary structure comprises 265 residues: Neuronal membrane glycoprotein M6-b (265 aa).

A helical membrane pass occupies residues 31–51; sequence GGVPYASLVATILCFSGVALF. Asn73 carries N-linked (GlcNAc...) asparagine glycosylation. Transmembrane regions (helical) follow at residues 90–110 and 136–156; these read VIYG…AEGF and FVFL…FSAV. N-linked (GlcNAc...) asparagine glycosylation occurs at Asn177. Residues 224–244 form a helical membrane-spanning segment; that stretch reads LFIVACAGAGATVIALLIYMM. Ser257 is subject to Phosphoserine.

This sequence belongs to the myelin proteolipid protein family. As to quaternary structure, interacts with SERT.

The protein resides in the membrane. Its subcellular location is the cell membrane. In terms of biological role, may be involved in neural development. Involved in regulation of osteoblast function and bone formation. Involved in matrix vesicle release by osteoblasts; this function seems to involve maintenance of the actin cytoskeleton. May be involved in cellular trafficking of SERT and thereby in regulation of serotonin uptake. The protein is Neuronal membrane glycoprotein M6-b (GPM6B) of Pongo abelii (Sumatran orangutan).